A 277-amino-acid polypeptide reads, in one-letter code: Energy-coupling factor transporter ATP-binding protein EcfA (277 aa).

The region spanning 4-238 is the ABC transporter domain; it reads LETRDLTHIY…PELLTQTRLD (235 aa). 37–44 contributes to the ATP binding site; that stretch reads GPNGAGKS.

It belongs to the ABC transporter superfamily. Energy-coupling factor EcfA family. As to quaternary structure, forms a stable energy-coupling factor (ECF) transporter complex composed of 2 membrane-embedded substrate-binding proteins (S component), 2 ATP-binding proteins (A component) and 2 transmembrane proteins (T component).

Its subcellular location is the cell membrane. Functionally, ATP-binding (A) component of a common energy-coupling factor (ECF) ABC-transporter complex. Unlike classic ABC transporters this ECF transporter provides the energy necessary to transport a number of different substrates. This chain is Energy-coupling factor transporter ATP-binding protein EcfA, found in Methanoculleus marisnigri (strain ATCC 35101 / DSM 1498 / JR1).